The following is a 435-amino-acid chain: D-aminoacyl-tRNA deacylase (435 aa).

This sequence belongs to the DtdA deacylase family. In terms of assembly, monomer. Zn(2+) is required as a cofactor.

It carries out the reaction a D-aminoacyl-tRNA + H2O = a tRNA + a D-alpha-amino acid + H(+). It catalyses the reaction glycyl-tRNA(Ala) + H2O = tRNA(Ala) + glycine + H(+). In terms of biological role, D-aminoacyl-tRNA deacylase with broad substrate specificity. By recycling D-aminoacyl-tRNA to D-amino acids and free tRNA molecules, this enzyme counteracts the toxicity associated with the formation of D-aminoacyl-tRNA entities in vivo. This is D-aminoacyl-tRNA deacylase from Methanosphaerula palustris (strain ATCC BAA-1556 / DSM 19958 / E1-9c).